The sequence spans 457 residues: UDP-N-acetylmuramoyl-tripeptide--D-alanyl-D-alanine ligase (457 aa).

109-115 (GSSGKTT) provides a ligand contact to ATP.

This sequence belongs to the MurCDEF family. MurF subfamily.

It localises to the cytoplasm. The catalysed reaction is D-alanyl-D-alanine + UDP-N-acetyl-alpha-D-muramoyl-L-alanyl-gamma-D-glutamyl-meso-2,6-diaminopimelate + ATP = UDP-N-acetyl-alpha-D-muramoyl-L-alanyl-gamma-D-glutamyl-meso-2,6-diaminopimeloyl-D-alanyl-D-alanine + ADP + phosphate + H(+). It functions in the pathway cell wall biogenesis; peptidoglycan biosynthesis. Involved in cell wall formation. Catalyzes the final step in the synthesis of UDP-N-acetylmuramoyl-pentapeptide, the precursor of murein. This Haemophilus influenzae (strain ATCC 51907 / DSM 11121 / KW20 / Rd) protein is UDP-N-acetylmuramoyl-tripeptide--D-alanyl-D-alanine ligase.